The following is a 221-amino-acid chain: MDNLVLLRHGNSLWNQENLFTGWVDVRLSELGEKEAKTAGQLLREANRYPDVLFTSLLTRSIQTAHIALMEIDRVWLPTFRSWRLNERHYGSLQGKNKAQVLEEFGEEQFNSWRRGYDTPPPPLHSQADDPRYEEPPPLSESLKDVQNRLLPYWQGVILPHLVAGKVVLVVAHGNSLRALVKHLECISDTDVCQLNIPTGIPLVYSIDPSGCATHPGRYLP.

Substrate contacts are provided by residues 8-15 (RHGNSLWN), 21-22 (TG), Arg60, 87-90 (ERHY), Lys98, 114-115 (RR), and 174-175 (GN). Catalysis depends on His9, which acts as the Tele-phosphohistidine intermediate. The Proton donor/acceptor role is filled by Glu87. Residues 114 to 140 (RRGYDTPPPPLHSQADDPRYEEPPPLS) form a disordered region.

Belongs to the phosphoglycerate mutase family. BPG-dependent PGAM subfamily.

The enzyme catalyses (2R)-2-phosphoglycerate = (2R)-3-phosphoglycerate. The protein operates within carbohydrate degradation; glycolysis; pyruvate from D-glyceraldehyde 3-phosphate: step 3/5. Its function is as follows. Catalyzes the interconversion of 2-phosphoglycerate and 3-phosphoglycerate. This is 2,3-bisphosphoglycerate-dependent phosphoglycerate mutase from Tropheryma whipplei (strain TW08/27) (Whipple's bacillus).